The following is a 243-amino-acid chain: Peptidyl-tRNA hydrolase (243 aa).

Tyrosine 14 is a tRNA binding site. Histidine 19 serves as the catalytic Proton acceptor. Residues tyrosine 64, asparagine 66, and asparagine 112 each coordinate tRNA. Residues 190-207 (KAEEEKPRKEGKDGEKKP) show a composition bias toward basic and acidic residues. A disordered region spans residues 190–243 (KAEEEKPRKEGKDGEKKPAGQSHIRQARSSNQPKLPATGPMAEMLKKMFGNKGE). Over residues 212-222 (HIRQARSSNQP) the composition is skewed to polar residues.

This sequence belongs to the PTH family. As to quaternary structure, monomer.

The protein resides in the cytoplasm. The enzyme catalyses an N-acyl-L-alpha-aminoacyl-tRNA + H2O = an N-acyl-L-amino acid + a tRNA + H(+). In terms of biological role, hydrolyzes ribosome-free peptidyl-tRNAs (with 1 or more amino acids incorporated), which drop off the ribosome during protein synthesis, or as a result of ribosome stalling. Functionally, catalyzes the release of premature peptidyl moieties from peptidyl-tRNA molecules trapped in stalled 50S ribosomal subunits, and thus maintains levels of free tRNAs and 50S ribosomes. This chain is Peptidyl-tRNA hydrolase, found in Rhizobium etli (strain CIAT 652).